The chain runs to 583 residues: Undecaprenyl phosphate-alpha-4-amino-4-deoxy-L-arabinose arabinosyl transferase 2 (583 aa).

The disordered stretch occupies residues 1 to 20 (MTSRIQMHRTSPPPAYGTSA). 12 helical membrane-spanning segments follow: residues 42–62 (LLLVAFGLFYLLPLTSHGLWI), 113–135 (LFGVRIASALSTGLSVLLAYLIT), 145–165 (SFAAALLYMSFGLIAGQAGYS), 166–186 (NLDPQFTLWVNLSLVALWFAL), 209–229 (FMTKGFLAWLLPVLIALPYMI), 241–261 (GLVAVLVAIGISLPWVLSIHA), 290–310 (WWFYLPLLVASSLPWAALLPG), 321–341 (QAPTGFLLLWFLLPLAFFSLS), 345–365 (LPTYIMPCLLPLAVLMGSALI), 380–400 (SLLNLLIGVAAMVALLYIQLT), 409–429 (MLGLSLVFIMLMGWIIANLLP), and 440–460 (PALGIWLLVALLPAGMPGFIV).

It belongs to the glycosyltransferase 83 family.

Its subcellular location is the cell inner membrane. The catalysed reaction is 4-amino-4-deoxy-alpha-L-arabinopyranosyl di-trans,octa-cis-undecaprenyl phosphate + lipid IVA = lipid IIA + di-trans,octa-cis-undecaprenyl phosphate.. The protein operates within lipopolysaccharide metabolism; 4-amino-4-deoxy-beta-L-arabinose-lipid A biosynthesis. In terms of biological role, catalyzes the transfer of the L-Ara4N moiety of the glycolipid undecaprenyl phosphate-alpha-L-Ara4N to lipid A. The modified arabinose is attached to lipid A and is required for resistance to polymyxin and cationic antimicrobial peptides. In Pseudomonas fluorescens (strain ATCC BAA-477 / NRRL B-23932 / Pf-5), this protein is Undecaprenyl phosphate-alpha-4-amino-4-deoxy-L-arabinose arabinosyl transferase 2.